We begin with the raw amino-acid sequence, 345 residues long: Phosphoribosylformylglycinamidine cyclo-ligase (345 aa).

This sequence belongs to the AIR synthase family.

The protein resides in the cytoplasm. The enzyme catalyses 2-formamido-N(1)-(5-O-phospho-beta-D-ribosyl)acetamidine + ATP = 5-amino-1-(5-phospho-beta-D-ribosyl)imidazole + ADP + phosphate + H(+). Its pathway is purine metabolism; IMP biosynthesis via de novo pathway; 5-amino-1-(5-phospho-D-ribosyl)imidazole from N(2)-formyl-N(1)-(5-phospho-D-ribosyl)glycinamide: step 2/2. The polypeptide is Phosphoribosylformylglycinamidine cyclo-ligase (Shewanella sp. (strain MR-7)).